Here is a 380-residue protein sequence, read N- to C-terminus: Serpin B7 (380 aa).

Residue serine 217 is modified to Phosphoserine.

It belongs to the serpin family. Ov-serpin subfamily.

Its subcellular location is the cytoplasm. In terms of biological role, might function as an inhibitor of Lys-specific proteases. Might influence the maturation of megakaryocytes via its action as a serpin. This Mus musculus (Mouse) protein is Serpin B7 (Serpinb7).